Consider the following 185-residue polypeptide: Homeobox expressed in ES cells 1 (185 aa).

The segment at 32 to 69 is disordered; the sequence is KKDCTTSVRPHRPWTDTCGDSEKGGNPPLHAPDLPSET. The segment at residues 108-167 is a DNA-binding region (homeobox); that stretch reads GRRPRTAFTQNQVEVLENVFRVNCYPGIDIREDLAQKLNLEEDRIQIWFQNRRAKMKRSR.

The protein belongs to the ANF homeobox family. In terms of assembly, can form heterodimers with PROP1 in binding to DNA Interacts with TLE1. High levels found in the embryonic liver, lower level expression seen in the viscera, amnion and yolk sac.

The protein resides in the nucleus. Functionally, required for the normal development of the forebrain, eyes and other anterior structures such as the olfactory placodes and pituitary gland. Possible transcriptional repressor. Binds to the palindromic PIII sequence, 5'-AGCTTGAGTCTAATTGAATTAACTGTAC-3'. HESX1 and PROP1 bind as heterodimers on this palindromic site, and, in vitro, HESX1 can antagonize PROP1 activation. The protein is Homeobox expressed in ES cells 1 (Hesx1) of Mus musculus (Mouse).